Consider the following 210-residue polypeptide: Large ribosomal subunit protein uL3 (210 aa).

Residues 125–151 (RHGQSRGPMSHGSRYHRRPGSMGPVAP) are disordered.

The protein belongs to the universal ribosomal protein uL3 family. As to quaternary structure, part of the 50S ribosomal subunit. Forms a cluster with proteins L14 and L19.

One of the primary rRNA binding proteins, it binds directly near the 3'-end of the 23S rRNA, where it nucleates assembly of the 50S subunit. The protein is Large ribosomal subunit protein uL3 of Bacillus mycoides (strain KBAB4) (Bacillus weihenstephanensis).